The primary structure comprises 572 residues: Oxygen-dependent choline dehydrogenase (572 aa).

Residue 9 to 38 (DYVIIGGGSAGSVLGARLSEDKDKNVLVLE) coordinates FAD. His-477 serves as the catalytic Proton acceptor.

Belongs to the GMC oxidoreductase family. It depends on FAD as a cofactor.

It catalyses the reaction choline + A = betaine aldehyde + AH2. The enzyme catalyses betaine aldehyde + NAD(+) + H2O = glycine betaine + NADH + 2 H(+). It participates in amine and polyamine biosynthesis; betaine biosynthesis via choline pathway; betaine aldehyde from choline (cytochrome c reductase route): step 1/1. In terms of biological role, involved in the biosynthesis of the osmoprotectant glycine betaine. Catalyzes the oxidation of choline to betaine aldehyde and betaine aldehyde to glycine betaine at the same rate. The sequence is that of Oxygen-dependent choline dehydrogenase from Staphylococcus epidermidis (strain ATCC 35984 / DSM 28319 / BCRC 17069 / CCUG 31568 / BM 3577 / RP62A).